Reading from the N-terminus, the 853-residue chain is Leucine-rich repeat and death domain-containing protein 1 (853 aa).

Residues 1–78 (MSEDGSNVEP…EEKNTGIPFS (78 aa)) are disordered. Positions 19 to 31 (LEEPGSEISDLLD) are enriched in acidic residues. Over residues 56–65 (QSAASFTSQL) the composition is skewed to polar residues. LRR repeat units follow at residues 133–157 (MKSD…IVKV), 159–180 (YVKY…DPGD), 183–204 (GLEI…IQLF), 206–227 (NLKI…LLQL), 229–251 (NMRQ…EHLR), 252–274 (YLET…SSLK), 275–297 (NLRI…CFLP), 298–319 (KLNS…VREL), 321–342 (NLES…IFQL), 344–365 (KIKE…IENF), 367–388 (ELRL…ISHC), 390–411 (NLES…IRKL), 413–435 (NLRQ…SHLS), 436–457 (NIHI…IKNC), 459–481 (KITR…CALQ), 482–503 (SLDY…MSFS), 505–527 (QLLH…CSLT), 528–549 (NLEY…ISAM), 551–573 (SLHV…CSLK), 574–596 (NLRV…SKLK), 597–618 (RIQK…LCQL), 620–641 (TLEE…PEEV), 646–668 (QLKI…GELR), 669–690 (SLVS…FLSL), 692–713 (VLQS…IYKL), and 715–736 (SLKE…ICKG). The 89-residue stretch at 757–845 (LEKIFNIVAN…DIMDKITALN (89 aa)) folds into the Death domain.

This chain is Leucine-rich repeat and death domain-containing protein 1 (Lrrd1), found in Mus musculus (Mouse).